We begin with the raw amino-acid sequence, 143 residues long: Myocilin opposite strand protein (143 aa).

The interval Met65 to Ala111 is disordered. A compositionally biased stretch (basic and acidic residues) spans Ala66 to Glu78.

In Mus musculus (Mouse), this protein is Myocilin opposite strand protein.